A 176-amino-acid polypeptide reads, in one-letter code: Warthog protein 5 (176 aa).

The signal sequence occupies residues 1 to 21; that stretch reads MCSMWLMASWLMAFVAGSTLA. N70 is a glycosylation site (N-linked (GlcNAc...) asparagine).

Expressed in seam cells, excretory cell, reproductive system, pharynx, pharyngeal-intestinal valve cells, neurons and neuronal support cells.

It is found in the secreted. Intercellular signal essential for a variety of patterning events during development. The sequence is that of Warthog protein 5 (wrt-5) from Caenorhabditis elegans.